The primary structure comprises 153 residues: Aspartate carbamoyltransferase regulatory chain (153 aa).

C109, C114, C138, and C141 together coordinate Zn(2+).

This sequence belongs to the PyrI family. In terms of assembly, contains catalytic and regulatory chains. It depends on Zn(2+) as a cofactor.

Involved in allosteric regulation of aspartate carbamoyltransferase. In Vibrio vulnificus (strain YJ016), this protein is Aspartate carbamoyltransferase regulatory chain.